Consider the following 2623-residue polypeptide: Probable polyketide synthase 31 (2623 aa).

A compositionally biased stretch (low complexity) spans 1 to 11; it reads MTQNIDNNNNK. A disordered region spans residues 1–25; the sequence is MTQNIDNNNNKLIRDRNDDDDVDRN. The 435-residue stretch at 27–461 folds into the Ketosynthase family 3 (KS3) domain; it reads DGDVAVIGIG…GSNVCLILSE (435 aa). Active-site for beta-ketoacyl synthase activity residues include Cys-199, His-338, and His-384. An acyl/malonyl transferase region spans residues 666-699; sequence GVSADIIIGHSLGEVSSPYCSGMIDFQTLCYLIY. Ser-676 (for acyl/malonyl transferase activity) is an active-site residue. Positions 959-1088 are N-terminal hotdog fold; it reads HEKIKSEGPS…GNFNLTKHNS (130 aa). The 309-residue stretch at 959 to 1267 folds into the PKS/mFAS DH domain; sequence HEKIKSEGPS…CALVSLGSNP (309 aa). His-1000 functions as the Proton acceptor; for dehydratase activity in the catalytic mechanism. The tract at residues 1105-1267 is C-terminal hotdog fold; that stretch reads NFTSISKQDF…CALVSLGSNP (163 aa). Asp-1177 serves as the catalytic Proton donor; for dehydratase activity. Residues 2524–2601 enclose the Carrier domain; it reads ANNEIIHSTI…QSIEIIKSAK (78 aa). At Ser-2561 the chain carries O-(pantetheine 4'-phosphoryl)serine. Residues 2600 to 2623 form a disordered region; the sequence is AKNNNKNNNNNNNKNNSNNKNKNN. A compositionally biased stretch (low complexity) spans 2601 to 2623; the sequence is KNNNKNNNNNNNKNNSNNKNKNN.

The cofactor is pantetheine 4'-phosphate.

Its function is as follows. Probable polyketide synthase. The sequence is that of Probable polyketide synthase 31 (pks31) from Dictyostelium discoideum (Social amoeba).